The following is a 340-amino-acid chain: Methionine import ATP-binding protein MetN (340 aa).

The region spanning 6–245 (IEFEGITKVF…PQTNVAKRFV (240 aa)) is the ABC transporter domain. 42 to 49 (GYSGAGKS) provides a ligand contact to ATP.

Belongs to the ABC transporter superfamily. Methionine importer (TC 3.A.1.24) family. In terms of assembly, the complex is composed of two ATP-binding proteins (MetN), two transmembrane proteins (MetI) and a solute-binding protein (MetQ).

It localises to the cell membrane. The catalysed reaction is L-methionine(out) + ATP + H2O = L-methionine(in) + ADP + phosphate + H(+). It carries out the reaction D-methionine(out) + ATP + H2O = D-methionine(in) + ADP + phosphate + H(+). Its function is as follows. Part of the ABC transporter complex MetNIQ involved in methionine import. Responsible for energy coupling to the transport system. The chain is Methionine import ATP-binding protein MetN from Corynebacterium diphtheriae (strain ATCC 700971 / NCTC 13129 / Biotype gravis).